We begin with the raw amino-acid sequence, 486 residues long: MAEFETIIGLEVHAQLNTESKIFSTSATKFGSPPNSQTNPVCLGLPGALPVLNESALEKAIMAGIAFGCDISLFTKFDRKNYFYPDLPKGYQISQFDKPICTGGGVTFTIKGEESSRYVRLTRIHMEEDAGKLIHSADPNIPQSYVDLNRAGTPLIEIVSEPDMRSSDEAYYYLNSLKSILKYIRVSDCNMEEGSLRCDANVSIRPKGSDKFGTRVEIKNLNSFKAVKAAIDYEVKWQTEMALEGKTFQQQTKLWDSVANKTVTMRTKEMSHDYRYFPDPDLPVIILQKETVESVRSKLPELPNERKNRFVEKLGLPKYDAEVLTAEREIADYFEDALKISGDAKKTSNWVKDEVLGVVNKESITISEFSVSAQRIGGLVKLIADGKISGKIAKTVFEELLISDKDAETIVTEKNLIVVRDDKEIERIVNEAIANNQDAVAKYKSGKDRALGAIVGYVMKVSKGKADPELVNQMLLDKLGSLPPKE.

The protein belongs to the GatB/GatE family. GatB subfamily. In terms of assembly, heterotrimer of A, B and C subunits.

It carries out the reaction L-glutamyl-tRNA(Gln) + L-glutamine + ATP + H2O = L-glutaminyl-tRNA(Gln) + L-glutamate + ADP + phosphate + H(+). It catalyses the reaction L-aspartyl-tRNA(Asn) + L-glutamine + ATP + H2O = L-asparaginyl-tRNA(Asn) + L-glutamate + ADP + phosphate + 2 H(+). Its function is as follows. Allows the formation of correctly charged Asn-tRNA(Asn) or Gln-tRNA(Gln) through the transamidation of misacylated Asp-tRNA(Asn) or Glu-tRNA(Gln) in organisms which lack either or both of asparaginyl-tRNA or glutaminyl-tRNA synthetases. The reaction takes place in the presence of glutamine and ATP through an activated phospho-Asp-tRNA(Asn) or phospho-Glu-tRNA(Gln). The sequence is that of Aspartyl/glutamyl-tRNA(Asn/Gln) amidotransferase subunit B from Leptospira borgpetersenii serovar Hardjo-bovis (strain JB197).